The chain runs to 147 residues: Ubiquitin-conjugating enzyme E2 5A (147 aa).

The segment covering 1 to 15 (MASKRIQKELKDLQK) has biased composition (basic and acidic residues). A disordered region spans residues 1 to 24 (MASKRIQKELKDLQKDPPTSCSAG). The UBC core domain maps to 1 to 147 (MASKRIQKEL…ARTWTQRYAM (147 aa)). Cysteine 85 acts as the Glycyl thioester intermediate in catalysis.

This sequence belongs to the ubiquitin-conjugating enzyme family.

It catalyses the reaction S-ubiquitinyl-[E1 ubiquitin-activating enzyme]-L-cysteine + [E2 ubiquitin-conjugating enzyme]-L-cysteine = [E1 ubiquitin-activating enzyme]-L-cysteine + S-ubiquitinyl-[E2 ubiquitin-conjugating enzyme]-L-cysteine.. The protein operates within protein modification; protein ubiquitination. Functionally, E2 conjugating enzyme that associates with the E3 ubiquitin-protein ligase EL5 to mediate ubiquitination of target proteins. The protein is Ubiquitin-conjugating enzyme E2 5A (UBC5A) of Oryza sativa subsp. japonica (Rice).